A 133-amino-acid chain; its full sequence is Ribosome-binding factor A (133 aa).

It belongs to the RbfA family. In terms of assembly, monomer. Binds 30S ribosomal subunits, but not 50S ribosomal subunits or 70S ribosomes.

Its subcellular location is the cytoplasm. Its function is as follows. One of several proteins that assist in the late maturation steps of the functional core of the 30S ribosomal subunit. Associates with free 30S ribosomal subunits (but not with 30S subunits that are part of 70S ribosomes or polysomes). Required for efficient processing of 16S rRNA. May interact with the 5'-terminal helix region of 16S rRNA. This chain is Ribosome-binding factor A, found in Chlamydia muridarum (strain MoPn / Nigg).